The following is a 506-amino-acid chain: Glutamate--tRNA ligase (506 aa).

Positions 24-34 (PSPTGTPHVGL) match the 'HIGH' region motif. The tract at residues 124-147 (TPEEVEQRHRAKGEDPKRGYDNYD) is disordered. Over residues 128 to 147 (VEQRHRAKGEDPKRGYDNYD) the composition is skewed to basic and acidic residues. The short motif at 268-272 (KLSKR) is the 'KMSKS' region element. Position 271 (Lys-271) interacts with ATP.

Belongs to the class-I aminoacyl-tRNA synthetase family. Glutamate--tRNA ligase type 1 subfamily. In terms of assembly, monomer.

The protein localises to the cytoplasm. The catalysed reaction is tRNA(Glu) + L-glutamate + ATP = L-glutamyl-tRNA(Glu) + AMP + diphosphate. Catalyzes the attachment of glutamate to tRNA(Glu) in a two-step reaction: glutamate is first activated by ATP to form Glu-AMP and then transferred to the acceptor end of tRNA(Glu). The polypeptide is Glutamate--tRNA ligase (Kocuria rhizophila (strain ATCC 9341 / DSM 348 / NBRC 103217 / DC2201)).